Here is a 141-residue protein sequence, read N- to C-terminus: Hemoglobin subunit alpha (141 aa).

The Globin domain maps to 1–141 (VLSPADKTNV…VSTVLTSKYR (141 aa)). The residue at position 3 (Ser-3) is a Phosphoserine. Lys-7 is subject to N6-succinyllysine. Thr-8 bears the Phosphothreonine mark. At Lys-11 the chain carries N6-succinyllysine. Residue Lys-16 is modified to N6-acetyllysine; alternate. Lys-16 carries the post-translational modification N6-succinyllysine; alternate. The residue at position 24 (Tyr-24) is a Phosphotyrosine. Position 35 is a phosphoserine (Ser-35). Lys-40 is subject to N6-succinyllysine. Ser-49 carries the post-translational modification Phosphoserine. His-58 contacts O2. His-87 is a binding site for heme b. Residue Ser-102 is modified to Phosphoserine. Thr-108 is subject to Phosphothreonine. Residue Ser-124 is modified to Phosphoserine. Phosphothreonine occurs at positions 134 and 137. Ser-138 is subject to Phosphoserine.

Belongs to the globin family. As to quaternary structure, heterotetramer of two alpha chains and two beta chains. As to expression, red blood cells.

Functionally, involved in oxygen transport from the lung to the various peripheral tissues. The polypeptide is Hemoglobin subunit alpha (Tamias merriami (Merriam's chipmunk)).